A 101-amino-acid polypeptide reads, in one-letter code: Small ribosomal subunit protein uS14 (101 aa).

The protein belongs to the universal ribosomal protein uS14 family. Part of the 30S ribosomal subunit. Contacts proteins S3 and S10.

Functionally, binds 16S rRNA, required for the assembly of 30S particles and may also be responsible for determining the conformation of the 16S rRNA at the A site. This Xylella fastidiosa (strain M23) protein is Small ribosomal subunit protein uS14.